The sequence spans 285 residues: MLPATFKLCAGISYRHMRNMTGLRKNAMIAIHHELNKLSGPGASTWINHIRRRSSLLSSPIAEETYSEADQCYVQQGQEALQKSISILEDQDGWQTEIESINGEKVMSKVLPGIGKVFKLEVTLEQQTGDLYDELVDNMEQMGEWNPNVKQVKILQKIGQETMITHEISAETPGNVVGPRDFVNVRHAKRRGSTCFLAGMSTQHPGMPEQKGFVRAENGPTCIVMRPSADDPNKTKFTWLLSLDLKGWIPKTVINRVLSQTQVDFVNHLRDRMASGGGIDAAIAC.

A mitochondrion-targeting transit peptide spans 1–61 (MLPATFKLCA…RRSSLLSSPI (61 aa)). In terms of domain architecture, START spans 65–278 (TYSEADQCYV…LRDRMASGGG (214 aa)).

In terms of assembly, may interact with TSPO. As to expression, highly expressed in the testis and at lower levels in the ovary, kidney and head.

Its subcellular location is the mitochondrion. The catalysed reaction is cholesterol(in) = cholesterol(out). It participates in steroid metabolism; cholesterol metabolism. Its function is as follows. Plays a key role in steroid hormone synthesis by enhancing the metabolism of cholesterol into pregnenolone. Mediates the transfer of cholesterol from the outer mitochondrial membrane to the inner mitochondrial membrane where it is cleaved to pregnenolone. The protein is Steroidogenic acute regulatory protein, mitochondrial (star) of Danio rerio (Zebrafish).